The following is a 172-amino-acid chain: Envelope protein UL45 (172 aa).

The Intravirion portion of the chain corresponds to 1-27; the sequence is MPLRASEHAYRPLGPGTPPMRARLPAA. Residues 28–48 form a helical; Signal-anchor for type II membrane protein membrane-spanning segment; that stretch reads AWVGVGTIIGGVVIIAALVLV. At 49–172 the chain is on the virion surface side; it reads PSRASWALSP…TSTRNALGLP (124 aa).

The protein belongs to the herpesviridae HHV-1 UL45 family.

It is found in the virion membrane. In terms of biological role, important virulence factor of HSV neurotropism. Seems to be required for glycoprotein B-induced fusion. Dispensable for growth in vitro. The sequence is that of Envelope protein UL45 from Human herpesvirus 1 (strain KOS) (HHV-1).